The primary structure comprises 545 residues: Glucose-6-phosphate isomerase (545 aa).

Residue Glu-343 is the Proton donor of the active site. Active-site residues include His-374 and Lys-513.

This sequence belongs to the GPI family.

The protein localises to the cytoplasm. The catalysed reaction is alpha-D-glucose 6-phosphate = beta-D-fructose 6-phosphate. It participates in carbohydrate biosynthesis; gluconeogenesis. It functions in the pathway carbohydrate degradation; glycolysis; D-glyceraldehyde 3-phosphate and glycerone phosphate from D-glucose: step 2/4. Catalyzes the reversible isomerization of glucose-6-phosphate to fructose-6-phosphate. This Methylibium petroleiphilum (strain ATCC BAA-1232 / LMG 22953 / PM1) protein is Glucose-6-phosphate isomerase.